We begin with the raw amino-acid sequence, 1293 residues long: Galactose/N-acetyl-D-galactosamine lectin heavy subunit 1 (1293 aa).

The N-terminal stretch at 1 to 15 (MKLLLLNILLLCCLA) is a signal peptide. Over 16 to 1234 (DKLNEFSADI…NNVGAIAAAT (1219 aa)) the chain is Extracellular. Asparagine 95, asparagine 198, asparagine 234, asparagine 261, asparagine 337, asparagine 377, asparagine 390, asparagine 468, asparagine 487, asparagine 643, asparagine 659, asparagine 890, asparagine 992, asparagine 1138, asparagine 1204, and asparagine 1214 each carry an N-linked (GlcNAc...) asparagine glycan. The helical transmembrane segment at 1235–1255 (TVAVVVVAVVVALIVVSIGLF) threads the bilayer. Residues 1256–1293 (KTYQLVSSAMKNAITITNENAEYVGADNEATNAATFNG) are Cytoplasmic-facing.

In terms of assembly, heterodimer composed of a 170 kDa heavy subunit (hgl) and a 31/35 kDa light subunit (lgl); disulfide-linked. N-glycosylated.

It localises to the cell membrane. Lectin which binds galactose and N-acetyl-D-galactosamine of host glycoproteins and thus mediates adhesion to host cells. Mediates adherence to host colonic mucins, an essential step for pathogenic tissue invasion. This chain is Galactose/N-acetyl-D-galactosamine lectin heavy subunit 1, found in Entamoeba histolytica (strain ATCC 30459 / HM-1:IMSS / ABRM).